The sequence spans 309 residues: tRNA pseudouridine synthase B (309 aa).

Asp-39 functions as the Nucleophile in the catalytic mechanism.

Belongs to the pseudouridine synthase TruB family. Type 1 subfamily.

The enzyme catalyses uridine(55) in tRNA = pseudouridine(55) in tRNA. In terms of biological role, responsible for synthesis of pseudouridine from uracil-55 in the psi GC loop of transfer RNAs. The chain is tRNA pseudouridine synthase B from Bacillus licheniformis (strain ATCC 14580 / DSM 13 / JCM 2505 / CCUG 7422 / NBRC 12200 / NCIMB 9375 / NCTC 10341 / NRRL NRS-1264 / Gibson 46).